A 331-amino-acid chain; its full sequence is GTP 3',8-cyclase (331 aa).

Residues 1-231 enclose the Radical SAM core domain; the sequence is MNAVDYLRIS…DGQVQGNGPA (231 aa). Arg-8 is a binding site for GTP. [4Fe-4S] cluster-binding residues include Cys-15 and Cys-19. Tyr-21 contacts S-adenosyl-L-methionine. Cys-22 provides a ligand contact to [4Fe-4S] cluster. GTP is bound at residue Arg-60. Gly-64 serves as a coordination point for S-adenosyl-L-methionine. Residue Thr-91 coordinates GTP. An S-adenosyl-L-methionine-binding site is contributed by Ser-115. Lys-157 contacts GTP. Residue Met-191 coordinates S-adenosyl-L-methionine. [4Fe-4S] cluster is bound by residues Cys-254 and Cys-257. Residue 259–261 coordinates GTP; that stretch reads RMR. Cys-271 is a binding site for [4Fe-4S] cluster.

Belongs to the radical SAM superfamily. MoaA family. As to quaternary structure, monomer and homodimer. The cofactor is [4Fe-4S] cluster.

It carries out the reaction GTP + AH2 + S-adenosyl-L-methionine = (8S)-3',8-cyclo-7,8-dihydroguanosine 5'-triphosphate + 5'-deoxyadenosine + L-methionine + A + H(+). It functions in the pathway cofactor biosynthesis; molybdopterin biosynthesis. Functionally, catalyzes the cyclization of GTP to (8S)-3',8-cyclo-7,8-dihydroguanosine 5'-triphosphate. In Acaryochloris marina (strain MBIC 11017), this protein is GTP 3',8-cyclase.